The sequence spans 465 residues: CCA-adding enzyme (465 aa).

Residues Ser63 and Lys66 each contribute to the ATP site. CTP is bound by residues Ser63 and Lys66. Positions 75, 77, and 127 each coordinate Mg(2+). 3 residues coordinate ATP: His149, Lys171, and Tyr180. Residues His149, Lys171, and Tyr180 each contribute to the CTP site.

It belongs to the tRNA nucleotidyltransferase/poly(A) polymerase family. Archaeal CCA-adding enzyme subfamily. In terms of assembly, homodimer. The cofactor is Mg(2+).

It catalyses the reaction a tRNA precursor + 2 CTP + ATP = a tRNA with a 3' CCA end + 3 diphosphate. The enzyme catalyses a tRNA with a 3' CCA end + 2 CTP + ATP = a tRNA with a 3' CCACCA end + 3 diphosphate. Catalyzes the addition and repair of the essential 3'-terminal CCA sequence in tRNAs without using a nucleic acid template. Adds these three nucleotides in the order of C, C, and A to the tRNA nucleotide-73, using CTP and ATP as substrates and producing inorganic pyrophosphate. tRNA 3'-terminal CCA addition is required both for tRNA processing and repair. Also involved in tRNA surveillance by mediating tandem CCA addition to generate a CCACCA at the 3' terminus of unstable tRNAs. While stable tRNAs receive only 3'-terminal CCA, unstable tRNAs are marked with CCACCA and rapidly degraded. This Aeropyrum pernix (strain ATCC 700893 / DSM 11879 / JCM 9820 / NBRC 100138 / K1) protein is CCA-adding enzyme.